The chain runs to 1557 residues: DVA-1 polyprotein (1557 aa).

The first 21 residues, 1–21, serve as a signal peptide directing secretion; it reads MKSTSFITLLLLSYFIVEAHS. The propeptide occupies 22–60; it reads SIFHWDDERLFKHDDTHSWLTDVQKAELETLKHQPIQLR. The N-linked (GlcNAc...) asparagine glycan is linked to N997.

This sequence belongs to the NPA family. Post-translationally, nematode polyprotein allergens (NPAs) are synthesized as large polypeptides that are subsequently proteolytically cleaved to active polypeptide units.

Functionally, has high binding affinity for fatty acids and retinoids. The chain is DVA-1 polyprotein (DVA-1) from Dictyocaulus viviparus (Bovine lungworm).